The following is a 306-amino-acid chain: Aspartate carbamoyltransferase catalytic subunit (306 aa).

Carbamoyl phosphate-binding residues include R51 and T52. K79 is a binding site for L-aspartate. Carbamoyl phosphate is bound by residues R101, H130, and Q133. R163 and R215 together coordinate L-aspartate. Carbamoyl phosphate-binding residues include G256 and P257.

It belongs to the aspartate/ornithine carbamoyltransferase superfamily. ATCase family. In terms of assembly, heterododecamer (2C3:3R2) of six catalytic PyrB chains organized as two trimers (C3), and six regulatory PyrI chains organized as three dimers (R2).

It carries out the reaction carbamoyl phosphate + L-aspartate = N-carbamoyl-L-aspartate + phosphate + H(+). It functions in the pathway pyrimidine metabolism; UMP biosynthesis via de novo pathway; (S)-dihydroorotate from bicarbonate: step 2/3. Functionally, catalyzes the condensation of carbamoyl phosphate and aspartate to form carbamoyl aspartate and inorganic phosphate, the committed step in the de novo pyrimidine nucleotide biosynthesis pathway. This is Aspartate carbamoyltransferase catalytic subunit from Ehrlichia ruminantium (strain Welgevonden).